Here is a 420-residue protein sequence, read N- to C-terminus: Nucleobindin-2 (420 aa).

An N-terminal signal peptide occupies residues 1–24 (MRWRTIQARYCFLLVPCVLTALEA). Residues 171 to 223 (RTRHEEFKKYEMMKEHERREYLKTLSEEKRKEEEAKFAEMKRKHEDHPKVNHP) mediate DNA binding. The segment at 194–225 (TLSEEKRKEEEAKFAEMKRKHEDHPKVNHPGS) is disordered. Positions 213–420 (KHEDHPKVNH…AGELKFEPHT (208 aa)) are binds to necdin. EF-hand domains follow at residues 241–276 (PNDFDPKTFFKLHDVNNDGFLDEQELEALFTKELDK) and 293–328 (ERLRMREHVMNEIDNNKDRLVTLEEFLRATEKKEFL). Residues Asp-254, Asn-256, Asp-258, Glu-265, Asp-306, Asn-308, Asp-310, and Glu-317 each coordinate Ca(2+). The GBA signature appears at 304 to 334 (EIDNNKDRLVTLEEFLRATEKKEFLEPDSWE). A Phosphoserine modification is found at Ser-332. Positions 366–386 (DELQKQKEELQRQHDHLEAQK) are enriched in basic and acidic residues. The tract at residues 366 to 420 (DELQKQKEELQRQHDHLEAQKQEYQQAVQQLEQKKFQQGIAPSGPAGELKFEPHT) is disordered. Low complexity predominate over residues 387 to 396 (QEYQQAVQQL).

This sequence belongs to the nucleobindin family. As to quaternary structure, interacts (via GBA motif) with guanine nucleotide-binding protein G(i) alpha subunit GNAI3. Preferentially interacts with inactive rather than active GNAI3. Interaction with GNAI3 is inhibited when NUCB2 binds calcium, probably due to a conformational change which renders the GBA motif inaccessible. Binds to the postmitotic growth suppressor NDN; coexpression abolishes NUCB2 secretion. Interacts with MC4R.

The protein localises to the golgi apparatus. It localises to the endoplasmic reticulum. The protein resides in the nucleus envelope. It is found in the membrane. Its subcellular location is the cytoplasm. The protein localises to the secreted. In terms of biological role, calcium-binding protein which may have a role in calcium homeostasis. Acts as a non-receptor guanine nucleotide exchange factor which binds to and activates guanine nucleotide-binding protein (G-protein) alpha subunit GNAI3. Functionally, anorexigenic peptide, seems to play an important role in hypothalamic pathways regulating food intake and energy homeostasis, acting in a leptin-independent manner. May also exert hypertensive roles and modulate blood pressure through directly acting on peripheral arterial resistance. In intestinal epithelial cells, plays a role in the inhibition of hepatic glucose production via MC4R receptor leading to increased cyclic adenosine monophosphate (cAMP) levels and glucagon-like peptide 1 (GLP-1) secretion. This Rattus norvegicus (Rat) protein is Nucleobindin-2 (Nucb2).